The sequence spans 216 residues: Sperm microtubule inner protein 8 (216 aa).

As to quaternary structure, microtubule inner protein component of sperm flagellar doublet microtubules.

It is found in the cytoplasm. Its subcellular location is the cytoskeleton. The protein resides in the flagellum axoneme. Microtubule inner protein (MIP) part of the dynein-decorated doublet microtubules (DMTs) in flagellum axoneme. May serve to reinforce and thus stabilize the microtubule structure in the sperm flagella. The polypeptide is Sperm microtubule inner protein 8 (Spmip8) (Rattus norvegicus (Rat)).